The chain runs to 310 residues: Vomeronasal type-1 receptor 97 (310 aa).

Over 1 to 19 the chain is Extracellular; that stretch reads MNKDNILHTDTNIKITLFS. The helical transmembrane segment at 20–40 threads the bilayer; it reads EVSIGISANSALFFSHLFMLF. At 41–49 the chain is on the cytoplasmic side; sequence EKNRSKPID. The helical transmembrane segment at 50-70 threads the bilayer; it reads LYIAFLSLTQLMLLITIGLIA. At 71-93 the chain is on the extracellular side; the sequence is ADMFMSRGRWDSTTCQSLIYLHR. Cys85 and Cys172 are oxidised to a cystine. A helical transmembrane segment spans residues 94–114; it reads LLRGFTLCATCLLNVLWTITL. Residues 115–131 lie on the Cytoplasmic side of the membrane; sequence SPRSSCLTTFKHKSPHH. Residues 132 to 152 traverse the membrane as a helical segment; that stretch reads ISGAFLFFCVLYISFGSHLFL. Over 153–190 the chain is Extracellular; that stretch reads STIATPNLTSDNFMYVTQSCSFLPMSYSRTSMFSTPMA. Asn159 carries N-linked (GlcNAc...) asparagine glycosylation. A helical transmembrane segment spans residues 191-211; sequence IREALLIGLIGLSSGYMVAFL. Residues 212–238 lie on the Cytoplasmic side of the membrane; sequence WRHKNQARHLHSTSLSSKVSPEQRATR. A helical transmembrane segment spans residues 239 to 259; the sequence is TIMILMSFFVVLYILENVVFY. At 260–269 the chain is on the extracellular side; that stretch reads SRMTFKDGSM. Residues 270–290 form a helical membrane-spanning segment; that stretch reads FYCVQIIVSHSYATISPFVFI. Topologically, residues 291–310 are cytoplasmic; sequence CTEKRIIKLWGSMSSRIVSI.

This sequence belongs to the G-protein coupled receptor 1 family. Expressed in 1-4% of neurons of the vomeronasal organ. Only one pheromone receptor gene may be expressed in a particular neuron. Not expressed in the main olfactory epithelium.

It localises to the cell membrane. Putative pheromone receptor implicated in the regulation of social as well as reproductive behavior. In Rattus norvegicus (Rat), this protein is Vomeronasal type-1 receptor 97 (Vom1r97).